The primary structure comprises 181 residues: MFSAFRDTASIGFSDTHQDEKTLRFLKKQISQFIKHLKEYYPNNELTKKLVMKYSDVQLLPYTKGATKDTYTSGLFDHTTGVIKIAPRDGLGNVRDEQSLNKSICHELAHGTRVKYPGESSHSDEWKDAWKTFLKIAADELGWKIEVPCSSVSFYGLTKDDCENCVWDQDPETCPKTAKLA.

As to quaternary structure, interacts with the major capsid protein.

The protein resides in the virion. In terms of biological role, one of the minor capsid proteins that constitute a network internal to the major capsid proteins and outside the lipid membrane. The minor capsid proteins glue and stabilize the capsomers. This is Minor capsid protein P4 from Chlorella (PBCV-1).